The following is a 308-amino-acid chain: Ornithine carbamoyltransferase (308 aa).

Carbamoyl phosphate contacts are provided by residues 55 to 58 (STRT), Gln82, Arg106, and 133 to 136 (HPCQ). L-ornithine is bound by residues Asn164, Asp227, and 231–232 (SM). Carbamoyl phosphate contacts are provided by residues 267–268 (CL) and Arg295.

Belongs to the aspartate/ornithine carbamoyltransferase superfamily. OTCase family.

The protein resides in the cytoplasm. It catalyses the reaction carbamoyl phosphate + L-ornithine = L-citrulline + phosphate + H(+). It functions in the pathway amino-acid biosynthesis; L-arginine biosynthesis; L-arginine from L-ornithine and carbamoyl phosphate: step 1/3. Its function is as follows. Reversibly catalyzes the transfer of the carbamoyl group from carbamoyl phosphate (CP) to the N(epsilon) atom of ornithine (ORN) to produce L-citrulline. The protein is Ornithine carbamoyltransferase of Prochlorococcus marinus subsp. pastoris (strain CCMP1986 / NIES-2087 / MED4).